The following is a 427-amino-acid chain: UPF0597 protein CPF_0803 (427 aa).

This sequence belongs to the UPF0597 family.

The polypeptide is UPF0597 protein CPF_0803 (Clostridium perfringens (strain ATCC 13124 / DSM 756 / JCM 1290 / NCIMB 6125 / NCTC 8237 / Type A)).